Consider the following 86-residue polypeptide: Neuropeptide-like 2 (86 aa).

The signal sequence occupies residues 1–19; that stretch reads MAKLAICILVFALFALALS. 2 propeptides span residues 20–34 and 45–86; these read ARVP…QEFL and IEKL…AAST.

As to expression, hemolymph (at protein level).

The protein resides in the secreted. The polypeptide is Neuropeptide-like 2 (Nplp2) (Drosophila melanogaster (Fruit fly)).